Consider the following 704-residue polypeptide: CAP-Gly domain-containing linker protein 4 (704 aa).

3 ANK repeats span residues 65–101, 149–180, and 186–215; these read TSVS…NVND, TNMN…DVDA, and NFGT…NPAF. In terms of domain architecture, CAP-Gly 1 spans 303–345; that stretch reads GTTEFASGQWAGIELDEPEGKNNGSVGRVQYFKCAPKYGIFAP. Positions 353–479 are disordered; that stretch reads KDGRKTTTHT…SATSAANNSH (127 aa). Low complexity-rich tracts occupy residues 360 to 371, 423 to 432, and 440 to 461; these read THTPSTRATPHA, SMSSSSSSSS, and PKKL…SLPS. One can recognise a CAP-Gly 2 domain in the interval 504–546; it reads GTTNFAPGYWYGIELEKPHGKNDGSVGGVQYFSCSPRYGIFAP. Phosphoserine occurs at positions 556 and 608. The region spanning 643–685 is the CAP-Gly 3 domain; sequence GPTDFASGIWLGLELRSAKGKNDGAVGDKRYFTCKPNYGVLVR.

This chain is CAP-Gly domain-containing linker protein 4 (Clip4), found in Mus musculus (Mouse).